Reading from the N-terminus, the 511-residue chain is UDP-N-acetylmuramoyl-L-alanyl-D-glutamate--2,6-diaminopimelate ligase (511 aa).

Position 33 (S33) interacts with UDP-N-acetyl-alpha-D-muramoyl-L-alanyl-D-glutamate. An ATP-binding site is contributed by 118-124; the sequence is GTNGKTT. UDP-N-acetyl-alpha-D-muramoyl-L-alanyl-D-glutamate is bound by residues 160-161, S187, Q193, and R195; that span reads TT. K227 bears the N6-carboxylysine mark. Meso-2,6-diaminopimelate contacts are provided by residues R403, 427 to 430, G478, and E482; that span reads DNPR. A Meso-diaminopimelate recognition motif motif is present at residues 427 to 430; sequence DNPR.

The protein belongs to the MurCDEF family. MurE subfamily. Mg(2+) serves as cofactor. Post-translationally, carboxylation is probably crucial for Mg(2+) binding and, consequently, for the gamma-phosphate positioning of ATP.

It is found in the cytoplasm. It catalyses the reaction UDP-N-acetyl-alpha-D-muramoyl-L-alanyl-D-glutamate + meso-2,6-diaminopimelate + ATP = UDP-N-acetyl-alpha-D-muramoyl-L-alanyl-gamma-D-glutamyl-meso-2,6-diaminopimelate + ADP + phosphate + H(+). The protein operates within cell wall biogenesis; peptidoglycan biosynthesis. Functionally, catalyzes the addition of meso-diaminopimelic acid to the nucleotide precursor UDP-N-acetylmuramoyl-L-alanyl-D-glutamate (UMAG) in the biosynthesis of bacterial cell-wall peptidoglycan. This chain is UDP-N-acetylmuramoyl-L-alanyl-D-glutamate--2,6-diaminopimelate ligase, found in Prochlorococcus marinus subsp. pastoris (strain CCMP1986 / NIES-2087 / MED4).